The sequence spans 231 residues: Ribose-5-phosphate isomerase A (231 aa).

Substrate-binding positions include 28–31 (TGST), 83–86 (DGAD), and 96–99 (KGGG). Catalysis depends on Glu105, which acts as the Proton acceptor. Lys123 lines the substrate pocket.

The protein belongs to the ribose 5-phosphate isomerase family. In terms of assembly, homodimer.

The enzyme catalyses aldehydo-D-ribose 5-phosphate = D-ribulose 5-phosphate. Its pathway is carbohydrate degradation; pentose phosphate pathway; D-ribose 5-phosphate from D-ribulose 5-phosphate (non-oxidative stage): step 1/1. In terms of biological role, catalyzes the reversible conversion of ribose-5-phosphate to ribulose 5-phosphate. This is Ribose-5-phosphate isomerase A from Sinorhizobium medicae (strain WSM419) (Ensifer medicae).